Consider the following 1116-residue polypeptide: Eukaryotic translation initiation factor 2-alpha kinase 3 (1116 aa).

Residues M1 to A29 form the signal peptide. At A30–D514 the chain is on the lumenal side. The disordered stretch occupies residues A77–R101. N258 carries N-linked (GlcNAc...) asparagine glycosylation. The helical transmembrane segment at P515–A535 threads the bilayer. Residues T536–N1116 are Cytoplasmic-facing. The segment at R550 to E571 is disordered. A Protein kinase domain is found at F593–F1077. L599–V607 is a binding site for ATP. Y619 carries the phosphotyrosine; by autocatalysis modification. K622 serves as a coordination point for ATP. Positions E647–M888 are insert loop. S715 carries the post-translational modification Phosphoserine. Phosphothreonine is present on T802. The segment at K841–L863 is disordered. Over residues S844–S856 the composition is skewed to low complexity. The active-site Proton acceptor is the D937. Residue T982 is modified to Phosphothreonine. Residues Q1090–N1116 form a disordered region. Phosphoserine is present on S1094. The segment covering Q1105 to N1116 has biased composition (polar residues).

The protein belongs to the protein kinase superfamily. Ser/Thr protein kinase family. GCN2 subfamily. As to quaternary structure, forms dimers with HSPA5/BIP in resting cells. Homotetramerizes in response to endoplasmic reticulum (ER) stress, leading to its activation. Interacts with HSP90B1/GRP94. Interacts with DNAJC3; inhibiting EIF2AK3/PERK activity. Interacts with ATAD3A; ATAD3A and EIF2S1/eIF-2-alpha occupy a common binding site within the cytoplasmic loop of EIF2AK3/PERK, leading to prevent EIF2AK3/PERK association with its substrate EIF2S1/eIF-2-alpha. Interacts with MFN2. Interacts with TMEM33. Interacts with PDIA6. Interacts with LACC1. In terms of processing, oligomerization of the N-terminal ER luminal domain by ER stress promotes EIF2AK3/PERK trans-autophosphorylation of the C-terminal cytoplasmic kinase domain at multiple residues including Thr-982 on the kinase activation loop. Autophosphorylated at Tyr-619 following endoplasmic reticulum stress, leading to activate its activity. Dephosphorylated at Tyr-619 by PTPN1/PTP1B, leading to inactivate its enzyme activity. Phosphorylation at Thr-802 by AKT (AKT1, AKT2 and/or AKT3) inactivates EIF2AK3/PERK. Post-translationally, ADP-ribosylated by PARP16 upon ER stress, which increases kinase activity. As to expression, ubiquitous. A high level expression is seen in secretory tissues.

It localises to the endoplasmic reticulum membrane. The catalysed reaction is L-seryl-[protein] + ATP = O-phospho-L-seryl-[protein] + ADP + H(+). The enzyme catalyses L-threonyl-[protein] + ATP = O-phospho-L-threonyl-[protein] + ADP + H(+). It catalyses the reaction L-tyrosyl-[protein] + ATP = O-phospho-L-tyrosyl-[protein] + ADP + H(+). Its activity is regulated as follows. Inhibited by HSPA5/BIP in absence of stress. Perturbation in protein folding in the endoplasmic reticulum (ER) promotes reversible dissociation from HSPA5/BIP and oligomerization, resulting in trans-autophosphorylation and kinase activity induction. Inactivated following phosphorylation at Thr-802 by AKT (AKT1, AKT2 and/or AKT3). Inhibited by ATAD3A at mitochondria-endoplasmic reticulum contact sites, providing a safe haven for mitochondrial protein translation during ER stress. Metabolic-stress sensing protein kinase that phosphorylates the alpha subunit of eukaryotic translation initiation factor 2 (EIF2S1/eIF-2-alpha) in response to various stress, such as unfolded protein response (UPR). Key effector of the integrated stress response (ISR) to unfolded proteins: EIF2AK3/PERK specifically recognizes and binds misfolded proteins, leading to its activation and EIF2S1/eIF-2-alpha phosphorylation. EIF2S1/eIF-2-alpha phosphorylation in response to stress converts EIF2S1/eIF-2-alpha in a global protein synthesis inhibitor, leading to a global attenuation of cap-dependent translation, while concomitantly initiating the preferential translation of ISR-specific mRNAs, such as the transcriptional activators ATF4 and QRICH1, and hence allowing ATF4- and QRICH1-mediated reprogramming. The EIF2AK3/PERK-mediated unfolded protein response increases mitochondrial oxidative phosphorylation by promoting ATF4-mediated expression of COX7A2L/SCAF1, thereby increasing formation of respiratory chain supercomplexes. In contrast to most subcellular compartments, mitochondria are protected from the EIF2AK3/PERK-mediated unfolded protein response due to EIF2AK3/PERK inhibition by ATAD3A at mitochondria-endoplasmic reticulum contact sites. In addition to EIF2S1/eIF-2-alpha, also phosphorylates NFE2L2/NRF2 in response to stress, promoting release of NFE2L2/NRF2 from the BCR(KEAP1) complex, leading to nuclear accumulation and activation of NFE2L2/NRF2. Serves as a critical effector of unfolded protein response (UPR)-induced G1 growth arrest due to the loss of cyclin-D1 (CCND1). Involved in control of mitochondrial morphology and function. The sequence is that of Eukaryotic translation initiation factor 2-alpha kinase 3 from Homo sapiens (Human).